Reading from the N-terminus, the 272-residue chain is Ribosomal RNA small subunit methyltransferase A (272 aa).

Residues Asn-18, Leu-20, Gly-45, Glu-66, Asp-91, and Asn-113 each contribute to the S-adenosyl-L-methionine site.

Belongs to the class I-like SAM-binding methyltransferase superfamily. rRNA adenine N(6)-methyltransferase family. RsmA subfamily.

Its subcellular location is the cytoplasm. It carries out the reaction adenosine(1518)/adenosine(1519) in 16S rRNA + 4 S-adenosyl-L-methionine = N(6)-dimethyladenosine(1518)/N(6)-dimethyladenosine(1519) in 16S rRNA + 4 S-adenosyl-L-homocysteine + 4 H(+). Functionally, specifically dimethylates two adjacent adenosines (A1518 and A1519) in the loop of a conserved hairpin near the 3'-end of 16S rRNA in the 30S particle. May play a critical role in biogenesis of 30S subunits. This chain is Ribosomal RNA small subunit methyltransferase A, found in Serratia proteamaculans (strain 568).